Consider the following 554-residue polypeptide: Glypican-1 (554 aa).

The first 21 residues, Met-1–Ala-21, serve as a signal peptide directing secretion. 7 cysteine pairs are disulfide-bonded: Cys-32–Cys-68, Cys-62–Cys-256, Cys-69–Cys-259, Cys-191–Cys-343, Cys-246–Cys-279, Cys-268–Cys-415, and Cys-272–Cys-401. Asn-79 and Asn-116 each carry an N-linked (GlcNAc...) asparagine glycan. The disordered stretch occupies residues Pro-346–Lys-369. Residues Ser-353–Lys-369 are compositionally biased toward basic and acidic residues. Residues Ser-486, Ser-488, and Ser-490 are each glycosylated (O-linked (Xyl...) (heparan sulfate) serine).

This sequence belongs to the glypican family. O-glycosylated with heparan sulfate side chains.

Its subcellular location is the cell membrane. It localises to the secreted. It is found in the extracellular space. Its function is as follows. Cell surface proteoglycan that bears heparan sulfate. The sequence is that of Glypican-1 (gpc1) from Xenopus tropicalis (Western clawed frog).